Here is a 132-residue protein sequence, read N- to C-terminus: Small ribosomal subunit protein uS8 (132 aa).

It belongs to the universal ribosomal protein uS8 family. Part of the 30S ribosomal subunit. Contacts proteins S5 and S12.

Its function is as follows. One of the primary rRNA binding proteins, it binds directly to 16S rRNA central domain where it helps coordinate assembly of the platform of the 30S subunit. The polypeptide is Small ribosomal subunit protein uS8 (Ehrlichia ruminantium (strain Welgevonden)).